Consider the following 1293-residue polypeptide: Phosphoribosylformylglycinamidine synthase (1293 aa).

Residues 308-319 (GAATGAGGEIRD) and Ala-675 each bind ATP. Mg(2+)-binding residues include Asp-676, Glu-715, Asn-719, and Asp-883. Position 885 (Ser-885) interacts with ATP. The 254-residue stretch at 1040-1293 (MAILREQGVN…MFRNARKFIG (254 aa)) folds into the Glutamine amidotransferase type-1 domain. Cys-1133 (nucleophile) is an active-site residue. Residues His-1258 and Glu-1260 contribute to the active site.

In the N-terminal section; belongs to the FGAMS family. In terms of assembly, monomer.

The protein localises to the cytoplasm. It carries out the reaction N(2)-formyl-N(1)-(5-phospho-beta-D-ribosyl)glycinamide + L-glutamine + ATP + H2O = 2-formamido-N(1)-(5-O-phospho-beta-D-ribosyl)acetamidine + L-glutamate + ADP + phosphate + H(+). It participates in purine metabolism; IMP biosynthesis via de novo pathway; 5-amino-1-(5-phospho-D-ribosyl)imidazole from N(2)-formyl-N(1)-(5-phospho-D-ribosyl)glycinamide: step 1/2. In terms of biological role, phosphoribosylformylglycinamidine synthase involved in the purines biosynthetic pathway. Catalyzes the ATP-dependent conversion of formylglycinamide ribonucleotide (FGAR) and glutamine to yield formylglycinamidine ribonucleotide (FGAM) and glutamate. This chain is Phosphoribosylformylglycinamidine synthase, found in Methylobacillus flagellatus (strain ATCC 51484 / DSM 6875 / VKM B-1610 / KT).